Here is a 411-residue protein sequence, read N- to C-terminus: Serine--tRNA ligase (411 aa).

An L-serine-binding site is contributed by 226–228 (TSE). ATP is bound at residue 257–259 (RKE). Residue Glu-280 participates in L-serine binding. An ATP-binding site is contributed by 344–347 (EISS). Residue Ser-379 participates in L-serine binding.

The protein belongs to the class-II aminoacyl-tRNA synthetase family. Type-1 seryl-tRNA synthetase subfamily. In terms of assembly, homodimer. The tRNA molecule binds across the dimer.

It is found in the cytoplasm. It catalyses the reaction tRNA(Ser) + L-serine + ATP = L-seryl-tRNA(Ser) + AMP + diphosphate + H(+). It carries out the reaction tRNA(Sec) + L-serine + ATP = L-seryl-tRNA(Sec) + AMP + diphosphate + H(+). Its pathway is aminoacyl-tRNA biosynthesis; selenocysteinyl-tRNA(Sec) biosynthesis; L-seryl-tRNA(Sec) from L-serine and tRNA(Sec): step 1/1. Its function is as follows. Catalyzes the attachment of serine to tRNA(Ser). Is also able to aminoacylate tRNA(Sec) with serine, to form the misacylated tRNA L-seryl-tRNA(Sec), which will be further converted into selenocysteinyl-tRNA(Sec). The protein is Serine--tRNA ligase of Campylobacter jejuni subsp. doylei (strain ATCC BAA-1458 / RM4099 / 269.97).